We begin with the raw amino-acid sequence, 298 residues long: tRNA-uridine aminocarboxypropyltransferase 2 (298 aa).

Position 1 is an N-acetylmethionine (M1). The interval 1 to 52 (MESQKEARILQEPVARPPGASRSQTPNAKERQEGGPVPAAAALGAEADDDSA) is disordered. S132 is modified (phosphoserine). The short motif at 178–181 (DGTW) is the DXTW element.

Belongs to the TDD superfamily. DTWD2 family.

It localises to the nucleus. It is found in the cytoplasm. It catalyses the reaction a uridine in tRNA + S-adenosyl-L-methionine = a 3-[(3S)-3-amino-3-carboxypropyl]uridine in tRNA + S-methyl-5'-thioadenosine + H(+). Its function is as follows. Catalyzes the formation of 3-(3-amino-3-carboxypropyl)uridine (acp3U) at position 20a in the D-loop of several cytoplasmic tRNAs (acp3U(20a)). Also has a weak activity to form acp3U at position 20 in the D-loop of tRNAs (acp3U(20)). Involved in glycoRNA biosynthesis by mediating formation of acp3U, which acts as an attachment site for N-glycans on tRNAs. GlycoRNAs consist of RNAs modified with secretory N-glycans that are presented on the cell surface. The protein is tRNA-uridine aminocarboxypropyltransferase 2 of Macaca fascicularis (Crab-eating macaque).